The sequence spans 570 residues: Protein HEATR9 (570 aa).

The protein is Protein HEATR9 (HEATR9) of Homo sapiens (Human).